The following is a 93-amino-acid chain: Small ribosomal subunit protein uS19 (93 aa).

It belongs to the universal ribosomal protein uS19 family.

In terms of biological role, protein S19 forms a complex with S13 that binds strongly to the 16S ribosomal RNA. This is Small ribosomal subunit protein uS19 from Micrococcus luteus (strain ATCC 4698 / DSM 20030 / JCM 1464 / CCM 169 / CCUG 5858 / IAM 1056 / NBRC 3333 / NCIMB 9278 / NCTC 2665 / VKM Ac-2230) (Micrococcus lysodeikticus).